The chain runs to 1058 residues: Leucine-rich repeat and coiled-coil domain-containing protein PF3D7_0703800 (1058 aa).

Basic residues predominate over residues 1 to 10; the sequence is MAIKKKKKET. Residues 1 to 34 form a disordered region; that stretch reads MAIKKKKKETKSKDNNNDNLRNEKKSTNLENGKY. Over residues 11-34 the composition is skewed to basic and acidic residues; it reads KSKDNNNDNLRNEKKSTNLENGKY. The stretch at 515–544 forms a coiled coil; it reads LKQLYTFIKNYENNNDKLNIKSQIINKDKN. Positions 641 to 661 are enriched in basic and acidic residues; the sequence is ENKDHLQHEEHTHEEEPKDAN. Disordered regions lie at residues 641–665 and 706–728; these read ENKDHLQHEEHTHEEEPKDANGDMV and NIEDKSGDMENMKEPNGDMENMK. Residues 872-905 adopt a coiled-coil conformation; that stretch reads NYDHTQENILKNKNNMEDQNNLLEQNIMTDQLQN.

The sequence is that of Leucine-rich repeat and coiled-coil domain-containing protein PF3D7_0703800 from Plasmodium falciparum (isolate 3D7).